The following is a 66-amino-acid chain: MPKMKTHRGAAKRFKKTGTGKLKRGHAYTSHLFANKTQKQKRKLRKATLVSPGDFKRIRQLLDNLK.

The segment covering 1-26 (MPKMKTHRGAAKRFKKTGTGKLKRGH) has biased composition (basic residues). Positions 1 to 48 (MPKMKTHRGAAKRFKKTGTGKLKRGHAYTSHLFANKTQKQKRKLRKAT) are disordered.

It belongs to the bacterial ribosomal protein bL35 family.

The sequence is that of Large ribosomal subunit protein bL35 from Geobacillus sp. (strain WCH70).